A 145-amino-acid chain; its full sequence is uncharacterized protein (145 aa).

Residues 1 to 26 form the signal peptide; it reads MAILLPLKSILPWCCITFSFLLSSSG.

This is an uncharacterized protein from Saccharomyces cerevisiae (strain ATCC 204508 / S288c) (Baker's yeast).